The following is a 241-amino-acid chain: MVKDTLFSTPIAKLGDFIFDENVAEVFPDMIQRSVPGYSNIITAIGMLAERFVTADSNVYDLGCSRGAATLSARRNINQPNVKIIGIDNSQPMVERCRQHIAAYHSEIPVEILCNDIRHVEIKNASMVILNFTLQFLPPEDRIALLTKIYEGLNPNGVLVLSEKFRFEDTKINHLLIDLHHQFKRANGYSELEVSQKRTALENVMRTDSIETHKVRLKNVGFSQVELWFQCFNFGSMIAVK.

S-adenosyl-L-methionine-binding positions include tyrosine 38, 63–65 (GCS), 88–89 (DN), 116–117 (DI), asparagine 131, and arginine 198.

The protein belongs to the class I-like SAM-binding methyltransferase superfamily. Cx-SAM synthase family. In terms of assembly, homodimer.

The enzyme catalyses prephenate + S-adenosyl-L-methionine = carboxy-S-adenosyl-L-methionine + 3-phenylpyruvate + H2O. Its function is as follows. Catalyzes the conversion of S-adenosyl-L-methionine (SAM) to carboxy-S-adenosyl-L-methionine (Cx-SAM). The chain is Carboxy-S-adenosyl-L-methionine synthase from Haemophilus influenzae (strain ATCC 51907 / DSM 11121 / KW20 / Rd).